We begin with the raw amino-acid sequence, 176 residues long: Ribosome maturation factor RimM (176 aa).

Residues 93 to 172 form the PRC barrel domain; it reads KDEFFYFDII…KIQVKNSLDI (80 aa).

Belongs to the RimM family. As to quaternary structure, binds ribosomal protein uS19.

It localises to the cytoplasm. Its function is as follows. An accessory protein needed during the final step in the assembly of 30S ribosomal subunit, possibly for assembly of the head region. Essential for efficient processing of 16S rRNA. May be needed both before and after RbfA during the maturation of 16S rRNA. It has affinity for free ribosomal 30S subunits but not for 70S ribosomes. The sequence is that of Ribosome maturation factor RimM from Campylobacter fetus subsp. fetus (strain 82-40).